A 703-amino-acid chain; its full sequence is Antigen peptide transporter 2 (703 aa).

The Lumenal portion of the chain corresponds to 1–6 (MALSHP). Residues 7–27 (RPWASLLLVDLALLGLLQSSL) form a helical membrane-spanning segment. The Cytoplasmic portion of the chain corresponds to 28-56 (GTLLPPGLPGLWLEGTLRLGVLWGLLKVG). The chain crosses the membrane as a helical span at residues 57–77 (GLLRLVGTFLPLLCLTNPLFF). At 78-98 (SLRALVGSTMSTSVVRVASAS) the chain is on the lumenal side. The helical transmembrane segment at 99 to 119 (WGWLLADYGAVALSLAVWAVL) threads the bilayer. Over 120–148 (SPAGAQEKEPGQENNRALMIRLLRLSKPD) the chain is Cytoplasmic. A helical membrane pass occupies residues 149 to 169 (LPFLIVAFIFLAMAVWWEMFI). The ABC transmembrane type-1 domain occupies 152-435 (LIVAFIFLAM…LVYMYGDMLS (284 aa)). Over 170–187 (PHYSGRVIDILGGDFDPD) the chain is Lumenal. Residues 188–208 (AFASAIFFMCLFSVGSSLSAG) form a helical membrane-spanning segment. At 209–266 (CRGGSFLFAESRINLRIREQLFSSLLRQDLAFFQETKTGELNSRLSSDTSLMSQWLSL) the chain is on the cytoplasmic side. Residues 267–287 (NANILLRSLVKVVGLYYFMLQ) traverse the membrane as a helical segment. The Lumenal portion of the chain corresponds to 288 to 293 (VSPRLT). Residues 294–314 (FLSLLDLPLTIAAEKVYNPRH) form a helical membrane-spanning segment. A part of the peptide-binding site region spans residues 301–389 (PLTIAAEKVY…QRVMALGMQV (89 aa)). Residues 315–374 (QAVLKEIQDAVAKAGQVVREAVGGLQTVRSFGAEEQEVRRYKEALERCRQLWWRRDLEKS) are Cytoplasmic-facing. A helical membrane pass occupies residues 375–395 (LYLVIQRVMALGMQVLILNVG). Over 396 to 408 (VQQILAGEVTRGG) the chain is Lumenal. Residues 409-429 (LLSFLLYQEEVGHHVQNLVYM) traverse the membrane as a helical segment. Positions 414-433 (LYQEEVGHHVQNLVYMYGDM) are part of the peptide-binding site. Topologically, residues 430–703 (YGDMLSNVGA…AHLVQQRLEA (274 aa)) are cytoplasmic. An ABC transporter domain is found at 468–702 (VEFQDVSFSY…YAHLVQQRLE (235 aa)). 503–510 (GPNGSGKS) serves as a coordination point for ATP.

It belongs to the ABC transporter superfamily. ABCB family. MHC peptide exporter (TC 3.A.1.209) subfamily. Heterodimer of TAP1 and TAP2 (TAP1-TAP2). A component of the peptide loading complex (PLC), interacts via TAPBP with MHCI heterodimer; this interaction mediates peptide-MHCI assembly. It depends on Mg(2+) as a cofactor.

Its subcellular location is the endoplasmic reticulum membrane. It carries out the reaction a peptide antigen(in) + ATP + H2O = a peptide antigen(out) + ADP + phosphate + H(+). ABC transporter associated with antigen processing. In complex with TAP1 mediates unidirectional translocation of peptide antigens from cytosol to endoplasmic reticulum (ER) for loading onto MHC class I (MHCI) molecules. Uses the chemical energy of ATP to export peptides against the concentration gradient. During the transport cycle alternates between 'inward-facing' state with peptide binding site facing the cytosol to 'outward-facing' state with peptide binding site facing the ER lumen. Peptide antigen binding to ATP-loaded TAP1-TAP2 induces a switch to hydrolysis-competent 'outward-facing' conformation ready for peptide loading onto nascent MHCI molecules. Subsequently ATP hydrolysis resets the transporter to the 'inward facing' state for a new cycle. As a component of the peptide loading complex (PLC), acts as a molecular scaffold essential for peptide-MHCI assembly and antigen presentation. The sequence is that of Antigen peptide transporter 2 (Tap2) from Rattus norvegicus (Rat).